The following is a 346-amino-acid chain: Holliday junction branch migration complex subunit RuvB (346 aa).

The interval 1–181 (MSDRNPLIDA…FGIPTRLNFY (181 aa)) is large ATPase domain (RuvB-L). Residues L20, R21, G62, K65, T66, T67, 128–130 (EDF), R171, Y181, and R218 contribute to the ATP site. T66 lines the Mg(2+) pocket. The tract at residues 182–252 (TVEELEYIVR…IADEALSRLE (71 aa)) is small ATPAse domain (RuvB-S). The tract at residues 255 to 346 (NRGLDQLDRR…SQYGLFMEDE (92 aa)) is head domain (RuvB-H). The DNA site is built by R291, R310, and R315.

This sequence belongs to the RuvB family. Homohexamer. Forms an RuvA(8)-RuvB(12)-Holliday junction (HJ) complex. HJ DNA is sandwiched between 2 RuvA tetramers; dsDNA enters through RuvA and exits via RuvB. An RuvB hexamer assembles on each DNA strand where it exits the tetramer. Each RuvB hexamer is contacted by two RuvA subunits (via domain III) on 2 adjacent RuvB subunits; this complex drives branch migration. In the full resolvosome a probable DNA-RuvA(4)-RuvB(12)-RuvC(2) complex forms which resolves the HJ.

It localises to the cytoplasm. The enzyme catalyses ATP + H2O = ADP + phosphate + H(+). In terms of biological role, the RuvA-RuvB-RuvC complex processes Holliday junction (HJ) DNA during genetic recombination and DNA repair, while the RuvA-RuvB complex plays an important role in the rescue of blocked DNA replication forks via replication fork reversal (RFR). RuvA specifically binds to HJ cruciform DNA, conferring on it an open structure. The RuvB hexamer acts as an ATP-dependent pump, pulling dsDNA into and through the RuvAB complex. RuvB forms 2 homohexamers on either side of HJ DNA bound by 1 or 2 RuvA tetramers; 4 subunits per hexamer contact DNA at a time. Coordinated motions by a converter formed by DNA-disengaged RuvB subunits stimulates ATP hydrolysis and nucleotide exchange. Immobilization of the converter enables RuvB to convert the ATP-contained energy into a lever motion, pulling 2 nucleotides of DNA out of the RuvA tetramer per ATP hydrolyzed, thus driving DNA branch migration. The RuvB motors rotate together with the DNA substrate, which together with the progressing nucleotide cycle form the mechanistic basis for DNA recombination by continuous HJ branch migration. Branch migration allows RuvC to scan DNA until it finds its consensus sequence, where it cleaves and resolves cruciform DNA. The sequence is that of Holliday junction branch migration complex subunit RuvB from Brucella anthropi (strain ATCC 49188 / DSM 6882 / CCUG 24695 / JCM 21032 / LMG 3331 / NBRC 15819 / NCTC 12168 / Alc 37) (Ochrobactrum anthropi).